A 76-amino-acid polypeptide reads, in one-letter code: Acyl carrier protein (76 aa).

The region spanning 1–76 (MATFDDVKDV…AAIDYIESKQ (76 aa)) is the Carrier domain. Ser-36 carries the post-translational modification O-(pantetheine 4'-phosphoryl)serine.

The protein belongs to the acyl carrier protein (ACP) family. In terms of processing, 4'-phosphopantetheine is transferred from CoA to a specific serine of apo-ACP by AcpS. This modification is essential for activity because fatty acids are bound in thioester linkage to the sulfhydryl of the prosthetic group.

It is found in the cytoplasm. Its pathway is lipid metabolism; fatty acid biosynthesis. In terms of biological role, carrier of the growing fatty acid chain in fatty acid biosynthesis. This Deinococcus deserti (strain DSM 17065 / CIP 109153 / LMG 22923 / VCD115) protein is Acyl carrier protein.